Here is a 191-residue protein sequence, read N- to C-terminus: Peptidyl-tRNA hydrolase (191 aa).

Residue tyrosine 17 participates in tRNA binding. Catalysis depends on histidine 22, which acts as the Proton acceptor. Positions 68, 70, and 116 each coordinate tRNA.

Belongs to the PTH family. Monomer.

The protein resides in the cytoplasm. It carries out the reaction an N-acyl-L-alpha-aminoacyl-tRNA + H2O = an N-acyl-L-amino acid + a tRNA + H(+). Hydrolyzes ribosome-free peptidyl-tRNAs (with 1 or more amino acids incorporated), which drop off the ribosome during protein synthesis, or as a result of ribosome stalling. Functionally, catalyzes the release of premature peptidyl moieties from peptidyl-tRNA molecules trapped in stalled 50S ribosomal subunits, and thus maintains levels of free tRNAs and 50S ribosomes. This is Peptidyl-tRNA hydrolase from Mycobacterium ulcerans (strain Agy99).